The chain runs to 489 residues: Probable transporter MCH1 (489 aa).

3 helical membrane-spanning segments follow: residues 30 to 50, 68 to 88, and 92 to 112; these read IAYI…LISL, MIVT…GIIA, and GPIT…AYLA. A glycan (N-linked (GlcNAc...) asparagine) is linked at asparagine 123. The next 8 membrane-spanning stretches (helical) occupy residues 132-152, 163-183, 202-222, 279-299, 307-327, 351-371, 388-408, and 421-441; these read TLVC…SALI, LLSI…GSQF, VFKA…IATS, VLYI…MFIA, VLAG…YALT, WILL…YMLS, FYIG…YPTI, and AYGT…LIYA. The N-linked (GlcNAc...) asparagine glycan is linked to asparagine 450. The chain crosses the membrane as a helical span at residues 462 to 482; the sequence is ETTALEFCAAILLTVVVTVLW.

Belongs to the major facilitator superfamily.

Its subcellular location is the vacuole membrane. Probable transporter. The chain is Probable transporter MCH1 (MCH1) from Candida glabrata (strain ATCC 2001 / BCRC 20586 / JCM 3761 / NBRC 0622 / NRRL Y-65 / CBS 138) (Yeast).